The sequence spans 576 residues: MAGUK p55 subfamily member 7 (576 aa).

L27 domains follow at residues 10 to 63 (SDTG…YEKE) and 65 to 122 (PMPV…YDPV). The region spanning 139 to 220 (IIRLVKNREP…AITFKIIPSI (82 aa)) is the PDZ domain. The 71-residue stretch at 228–298 (DGKMFVKALF…PSKQFQERRF (71 aa)) folds into the SH3 domain. A Guanylate kinase-like domain is found at 368 to 560 (YRLVILVGPV…AYNELRSTLE (193 aa)).

It belongs to the MAGUK family.

It is found in the membrane. The protein resides in the cell junction. Its subcellular location is the tight junction. The protein localises to the adherens junction. Acts as an important adapter that promotes epithelial cell polarity and tight junction formation. Involved in the assembly of protein complexes at sites of cell-cell contact. In Xenopus tropicalis (Western clawed frog), this protein is MAGUK p55 subfamily member 7 (mpp7).